A 2897-amino-acid chain; its full sequence is Chromodomain-helicase-DNA-binding protein 9 (2897 aa).

The segment covering 173–201 (QCTSLRSQQNRNNLNPGQNSLSQSKNFMN) has biased composition (polar residues). 3 disordered regions span residues 173 to 265 (QCTS…CSVS), 482 to 525 (QRQP…KQEK), and 537 to 671 (AKER…SAPL). Residue Lys197 forms a Glycyl lysine isopeptide (Lys-Gly) (interchain with G-Cter in SUMO2) linkage. Residues 220–235 (SNSQQSISMQQFSQTS) are compositionally biased toward low complexity. 2 stretches are compositionally biased toward polar residues: residues 247–260 (HQEGNFNGPSPNMT) and 484–506 (QPPSSKKSDGSGTYTKLQNTQVR). Lys499 is modified (N6-acetyllysine). The span at 508–525 (MSEKKQRKKVESESKQEK) shows a compositional bias: basic and acidic residues. Residue Ser550 is modified to Phosphoserine. Residues 573–593 (KPKDKDSKKTKTCSKLKEKTK) are compositionally biased toward basic and acidic residues. Residue Lys596 forms a Glycyl lysine isopeptide (Lys-Gly) (interchain with G-Cter in SUMO2) linkage. Ser611 bears the Phosphoserine mark. Positions 634 to 644 (RRSNRQIKRKK) are enriched in basic residues. A compositionally biased stretch (basic and acidic residues) spans 645–660 (YAEDIEGKQSEEEVKG). 2 Chromo domains span residues 690 to 761 (AIVD…HFFA) and 773 to 839 (VEVD…RLDR). The short motif at 868 to 872 (LNWLL) is the LXXLL motif 1 element. In terms of domain architecture, Helicase ATP-binding spans 872–1046 (LFNWYNRRNC…FSLLHFLEPL (175 aa)). 885–892 (DEMGLGKT) lines the ATP pocket. A DEAH box motif is present at residues 997–1000 (DEAH). The LXXLL motif 2 signature appears at 1036 to 1040 (LFSLL). A Helicase C-terminal domain is found at 1186 to 1337 (LIDKLLPKMK…KAVLQSMSGR (152 aa)). Positions 1461–1484 (KDELAELSEAESEGDEKPKLRRPC) are disordered. Acidic residues predominate over residues 1465-1474 (AELSEAESEG). Residues Ser1468 and Ser1472 each carry the phosphoserine modification. Residues 1475-1484 (DEKPKLRRPC) are compositionally biased toward basic and acidic residues. Glycyl lysine isopeptide (Lys-Gly) (interchain with G-Cter in SUMO2) cross-links involve residues Lys1588, Lys1738, and Lys1903. Residue Ser2026 is modified to Phosphoserine. The LXXLL motif 3 signature appears at 2031 to 2035 (LPRLL). Lys2038 participates in a covalent cross-link: Glycyl lysine isopeptide (Lys-Gly) (interchain with G-Cter in SUMO2). Disordered stretches follow at residues 2050–2238 (ENLK…QMNN) and 2305–2337 (GAATEYSDPSVPTPPGAGVKEEHDQSTQMSKVK). Residues Ser2058 and Ser2059 each carry the phosphoserine modification. Lys2074 participates in a covalent cross-link: Glycyl lysine isopeptide (Lys-Gly) (interchain with G-Cter in SUMO2). Phosphoserine is present on residues Ser2075 and Ser2079. Residues 2094–2104 (SGGKCETDRRM) are compositionally biased toward basic and acidic residues. A compositionally biased stretch (low complexity) spans 2141-2193 (SSCSSRSSSSSSSSSCSHSRSGSSSSSSSSCSSASSSSSSSTSSSSSSSSSSS). Basic and acidic residues predominate over residues 2203–2216 (AQKRESTTHMKAYD). Over residues 2221–2238 (ASLSTTQDETQDSFQMNN) the composition is skewed to polar residues. Residues 2332–2481 (QMSKVKKHVR…LSYTQPQGIP (150 aa)) are binds A/T-rich DNA. Glycyl lysine isopeptide (Lys-Gly) (interchain with G-Cter in SUMO2) cross-links involve residues Lys2350, Lys2356, and Lys2361. Residues 2429 to 2436 (KKRRGRRK) form an a.T hook-like region. The LXXLL motif 4 signature appears at 2721-2725 (LPNLL). The segment at 2729–2777 (GLLTKPTESGTEDKKGSDSKESEGKTERTESQSSENGGENSVSSSPSTS) is disordered. Residues 2739-2758 (TEDKKGSDSKESEGKTERTE) are compositionally biased toward basic and acidic residues. The segment covering 2759-2777 (SQSSENGGENSVSSSPSTS) has biased composition (low complexity). Residues 2793 to 2797 (LNPLL) carry the LXXLL motif 5 motif. The tract at residues 2827 to 2897 (VQNKNSDLGS…SEDSDSSNED (71 aa)) is disordered. Over residues 2840–2857 (VEVKEEDSRIKDQEDKGG) the composition is skewed to basic and acidic residues. Lys2843 participates in a covalent cross-link: Glycyl lysine isopeptide (Lys-Gly) (interchain with G-Cter in SUMO2). Positions 2877 to 2888 (ASSGSDSTSSSS) are enriched in low complexity.

The protein belongs to the SNF2/RAD54 helicase family. In terms of assembly, interacts with PPARA. Probably interacts with ESR1 and NR1I3. Post-translationally, phosphorylated on serine and tyrosine residues. As to expression, widely expressed at low levels. In bone marrow, expression is restricted to osteoprogenitor cells adjacent to mature osteoblasts.

Its subcellular location is the cytoplasm. The protein localises to the nucleus. The enzyme catalyses ATP + H2O = ADP + phosphate + H(+). Functionally, probable ATP-dependent chromatin-remodeling factor. Acts as a transcriptional coactivator for PPARA and possibly other nuclear receptors. Has DNA-dependent ATPase activity and binds to A/T-rich DNA. Associates with A/T-rich regulatory regions in promoters of genes that participate in the differentiation of progenitors during osteogenesis. The polypeptide is Chromodomain-helicase-DNA-binding protein 9 (CHD9) (Homo sapiens (Human)).